The chain runs to 248 residues: Prepilin leader peptidase/N-methyltransferase (248 aa).

The helical transmembrane segment at 1–21 threads the bilayer; that stretch reads MLSILFIFGLILGSFYYTAGC. Cys-36, Cys-39, Cys-61, and Cys-64 together coordinate Zn(2+). Helical transmembrane passes span 68-88, 90-110, 114-134, 143-163, 178-198, and 223-243; these read ISFM…AAGI, FGIS…IIVA, IHFM…LAAA, WYAG…IAAI, VIGF…SVLI, and AIAA…SFYI.

Belongs to the peptidase A24 family. Requires Zn(2+) as cofactor.

The protein resides in the cell membrane. It carries out the reaction Typically cleaves a -Gly-|-Phe- bond to release an N-terminal, basic peptide of 5-8 residues from type IV prepilin, and then N-methylates the new N-terminal amino group, the methyl donor being S-adenosyl-L-methionine.. Functionally, plays a role in type II pseudopili formation by proteolytically removing the leader sequence from substrate proteins and subsequently monomethylating the alpha-amino group of the newly exposed N-terminal phenylalanine. Substrates include proteins required for biogenesis of the type II general secretory apparatus. This chain is Prepilin leader peptidase/N-methyltransferase (comC), found in Bacillus subtilis (strain 168).